Reading from the N-terminus, the 271-residue chain is L-aspartate dehydrogenase (271 aa).

2 residues coordinate NAD(+): Ala-124 and Asn-192. Residue His-222 is part of the active site.

The protein belongs to the L-aspartate dehydrogenase family.

It catalyses the reaction L-aspartate + NADP(+) + H2O = oxaloacetate + NH4(+) + NADPH + H(+). The catalysed reaction is L-aspartate + NAD(+) + H2O = oxaloacetate + NH4(+) + NADH + H(+). It participates in cofactor biosynthesis; NAD(+) biosynthesis; iminoaspartate from L-aspartate (dehydrogenase route): step 1/1. In terms of biological role, specifically catalyzes the NAD or NADP-dependent dehydrogenation of L-aspartate to iminoaspartate. In Methanococcoides burtonii (strain DSM 6242 / NBRC 107633 / OCM 468 / ACE-M), this protein is L-aspartate dehydrogenase.